The sequence spans 545 residues: RAN GTPase-activating protein 2 (545 aa).

The segment at 1 to 116 (MADILDSRPH…VAARELISED (116 aa)) is WPP. LRR repeat units lie at residues 213–236 (GSILSSLNLSDNALGEKGVRAFGA), 241–264 (LSSLEELYLMNDGISKEAAQAVSE), 269–296 (TENLRVLHFHNNMTGDEGALAIAEVVKR), 325–348 (CTHMEKLDLRDNMFGTEAGVSLSK), 353–380 (FKHMTELYLSYLNLEDEGAIAIVNALKE), 382–405 (ASPIEVLEMAGNDITVEAASAIAA), 410–433 (KQDLNKLNLSENELKDEGCVQIAN), 439–462 (HSKLQYIDMSTNYIRRAGARALAH), and 467–494 (KEAFKLLNIDGNIISEEGIEELKEIFKK). The disordered stretch occupies residues 496–545 (PELLGALDENDPDGEEDDDDEEDEEDEENEGNGNGELESKLKNLEVNQED). Over residues 503-525 (DENDPDGEEDDDDEEDEEDEENE) the composition is skewed to acidic residues.

It belongs to the RNA1 family. In terms of assembly, homodimer. Interacts with WIP1 and WIP2 through its WPP domain. Component of Ran complexes at least composed of WIT1 or WIT2, RANGAP1 or RANGAP2, and WIP1 or WIP2 or WIP3. Interacts with WIT1.

It is found in the cytoplasm. Its subcellular location is the nucleus membrane. The protein localises to the cytoskeleton. It localises to the spindle. The protein resides in the phragmoplast. In terms of biological role, GTPase activator for the nuclear Ras-related regulatory protein Ran, converting it to the putatively inactive GDP-bound state. The protein is RAN GTPase-activating protein 2 (RANGAP2) of Arabidopsis thaliana (Mouse-ear cress).